A 207-amino-acid chain; its full sequence is Probable HTH-type transcriptional regulator YttP (207 aa).

The HTH tetR-type domain occupies 3–63; sequence VSTKDKIIES…HLVSEFYEGY (61 aa). Positions 26-45 form a DNA-binding region, H-T-H motif; the sequence is SVREIAKSADVNVAHISYYF.

In Bacillus subtilis (strain 168), this protein is Probable HTH-type transcriptional regulator YttP (yttP).